The chain runs to 459 residues: MIFYNSLSGQKEQFKPIEANKIKMYACGVTVYDDCHIGHARTYIAFDVINRYFKYRGYDVTLVRNITDIDDKIIKRANENGESTTELVERNIKAMHDVFARLNILKPSKEPRATETIPEMVAMIETLIKKGYAYQGANGDVFYRVTKFADYGKLSKQNLEALQQGSRVDVVEEKENPMDFVLWKMAKEGEPAWDSPWGAGRPGWHIECSAMSKKLLGDTFDIHAGGSDLRFPHHENEIAQSEACNECTFANYWLHSGMVKVNAEKMSKSLNNFFTIVEVLEEYHPEVVRYFLASTVYRSEINYSKENLENAKASVERLFNALRDIEPIEVNLPDDASEYEEKFIKAMDNDFNTPEALAVLFSLAKEINTLKTTNKYKASGYAYLLRKLCDVLGILFTDIEEYFKQGDGVDASEIEKLIAERTQAKKDKNYARADEIRNQLQQQGIILEDSATGTTWKKG.

A Zn(2+)-binding site is contributed by cysteine 27. The short motif at valine 29–histidine 39 is the 'HIGH' region element. 3 residues coordinate Zn(2+): cysteine 208, histidine 233, and glutamate 237. The 'KMSKS' region motif lies at lysine 265–serine 269. Lysine 268 is a binding site for ATP.

The protein belongs to the class-I aminoacyl-tRNA synthetase family. In terms of assembly, monomer. It depends on Zn(2+) as a cofactor.

The protein resides in the cytoplasm. It catalyses the reaction tRNA(Cys) + L-cysteine + ATP = L-cysteinyl-tRNA(Cys) + AMP + diphosphate. In Francisella tularensis subsp. novicida (strain U112), this protein is Cysteine--tRNA ligase.